A 122-amino-acid chain; its full sequence is Lysozyme (122 aa).

The I-type lysozyme domain maps to 3–118 (GGIVSQRCLS…WNRLQKISGC (116 aa)). 7 disulfides stabilise this stretch: Cys-10/Cys-86, Cys-13/Cys-118, Cys-15/Cys-21, Cys-26/Cys-35, Cys-48/Cys-68, Cys-58/Cys-64, and Cys-82/Cys-100. Glu-18 acts as the Proton donor in catalysis. The active-site Nucleophile is the Asp-29. 41–47 (KEAYWID) serves as a coordination point for substrate. Residues Tyr-72, His-93, 93-95 (HNG), and Lys-102 each bind substrate.

This sequence belongs to the glycosyl hydrolase 22 family. Type-I lysozyme subfamily. In terms of assembly, monomer.

It localises to the secreted. The catalysed reaction is Hydrolysis of (1-&gt;4)-beta-linkages between N-acetylmuramic acid and N-acetyl-D-glucosamine residues in a peptidoglycan and between N-acetyl-D-glucosamine residues in chitodextrins.. Its function is as follows. Has bacteriolytic activity against Gram-positive bacteria M.luteus. Also has chitinase activity. The protein is Lysozyme of Meretrix lusoria (Hard clam).